A 208-amino-acid polypeptide reads, in one-letter code: LysM and putative peptidoglycan-binding domain-containing protein 2 (208 aa).

Residues 1–54 (MAEFSPVLPPLRDDGGGGRYGQPLFPRSRSGSESDSELSQSLARTKTRSYGSTA) are disordered. Over residues 27 to 42 (RSRSGSESDSELSQSL) the composition is skewed to low complexity. The LysM domain occupies 65 to 109 (IEHRVTDGETLQGIALKYGVTMEQIKRVNKLFSNDCIFLRNTLSI). Disordered stretches follow at residues 122–169 (LSLE…EELS) and 187–208 (AARKLKEDGGREEDDTNSYQEI). Residues 129–140 (SEGNTPQESPCV) are compositionally biased toward polar residues. Over residues 147-156 (PSPPPEPSVP) the composition is skewed to pro residues.

This is LysM and putative peptidoglycan-binding domain-containing protein 2 (lysmd2) from Danio rerio (Zebrafish).